The primary structure comprises 146 residues: Large ribosomal subunit protein uL15 (146 aa).

Residues 1-18 (MKLHELKPSEGSRKERNR) are compositionally biased toward basic and acidic residues. Residues 1–50 (MKLHELKPSEGSRKERNRVGRGTGSGNGKTSGRGHKGQKARSGGGVRLGF) are disordered. The span at 21–31 (RGTGSGNGKTS) shows a compositional bias: gly residues.

It belongs to the universal ribosomal protein uL15 family. Part of the 50S ribosomal subunit.

Binds to the 23S rRNA. The protein is Large ribosomal subunit protein uL15 of Listeria innocua serovar 6a (strain ATCC BAA-680 / CLIP 11262).